A 350-amino-acid chain; its full sequence is Phenylalanine--tRNA ligase alpha subunit (350 aa).

Mg(2+) is bound at residue Glu-271.

This sequence belongs to the class-II aminoacyl-tRNA synthetase family. Phe-tRNA synthetase alpha subunit type 1 subfamily. As to quaternary structure, tetramer of two alpha and two beta subunits. Mg(2+) is required as a cofactor.

It is found in the cytoplasm. It catalyses the reaction tRNA(Phe) + L-phenylalanine + ATP = L-phenylalanyl-tRNA(Phe) + AMP + diphosphate + H(+). The polypeptide is Phenylalanine--tRNA ligase alpha subunit (Verminephrobacter eiseniae (strain EF01-2)).